The chain runs to 47 residues: Gene 60 protein (47 aa).

This Mycobacterium phage L5 (Mycobacteriophage L5) protein is Gene 60 protein (60).